The primary structure comprises 155 residues: NADPH-dependent 7-cyano-7-deazaguanine reductase (155 aa).

Residues 1 to 20 show a composition bias toward polar residues; that stretch reads MMPNTDVSSLSMLGQQTETA. The segment at 1 to 26 is disordered; the sequence is MMPNTDVSSLSMLGQQTETAKSPEEA. The active-site Thioimide intermediate is the C53. Catalysis depends on D60, which acts as the Proton donor. Substrate is bound by residues 75-77 and 94-95; these read VES and HE.

The protein belongs to the GTP cyclohydrolase I family. QueF type 1 subfamily.

It is found in the cytoplasm. It catalyses the reaction 7-aminomethyl-7-carbaguanine + 2 NADP(+) = 7-cyano-7-deazaguanine + 2 NADPH + 3 H(+). The protein operates within tRNA modification; tRNA-queuosine biosynthesis. Its function is as follows. Catalyzes the NADPH-dependent reduction of 7-cyano-7-deazaguanine (preQ0) to 7-aminomethyl-7-deazaguanine (preQ1). The polypeptide is NADPH-dependent 7-cyano-7-deazaguanine reductase (Rhizobium etli (strain CIAT 652)).